The primary structure comprises 259 residues: Deoxyribose-phosphate aldolase (259 aa).

Residue D102 is the Proton donor/acceptor of the active site. K167 serves as the catalytic Schiff-base intermediate with acetaldehyde. Residue K201 is the Proton donor/acceptor of the active site.

Belongs to the DeoC/FbaB aldolase family. DeoC type 2 subfamily.

It localises to the cytoplasm. The enzyme catalyses 2-deoxy-D-ribose 5-phosphate = D-glyceraldehyde 3-phosphate + acetaldehyde. It functions in the pathway carbohydrate degradation; 2-deoxy-D-ribose 1-phosphate degradation; D-glyceraldehyde 3-phosphate and acetaldehyde from 2-deoxy-alpha-D-ribose 1-phosphate: step 2/2. Its function is as follows. Catalyzes a reversible aldol reaction between acetaldehyde and D-glyceraldehyde 3-phosphate to generate 2-deoxy-D-ribose 5-phosphate. The sequence is that of Deoxyribose-phosphate aldolase from Escherichia coli O1:K1 / APEC.